A 113-amino-acid polypeptide reads, in one-letter code: T cell receptor alpha variable 5 (113 aa).

Residues 1–22 form the signal peptide; the sequence is MKTFAGFSFLFLWLQLDCMSRG. Residues 23–113 enclose the Ig-like domain; that stretch reads EDVEQSLFLS…DSAIYFCAES (91 aa). The N-linked (GlcNAc...) asparagine glycan is linked to N42. C43 and C110 form a disulfide bridge.

In terms of assembly, alpha-beta TR is a heterodimer composed of an alpha and beta chain; disulfide-linked. The alpha-beta TR is associated with the transmembrane signaling CD3 coreceptor proteins to form the TR-CD3 (TcR or TCR). The assembly of alpha-beta TR heterodimers with CD3 occurs in the endoplasmic reticulum where a single alpha-beta TR heterodimer associates with one CD3D-CD3E heterodimer, one CD3G-CD3E heterodimer and one CD247 homodimer forming a stable octameric structure. CD3D-CD3E and CD3G-CD3E heterodimers preferentially associate with TR alpha and TR beta chains, respectively. The association of the CD247 homodimer is the last step of TcR assembly in the endoplasmic reticulum and is required for transport to the cell surface.

It localises to the cell membrane. V region of the variable domain of T cell receptor (TR) alpha chain that participates in the antigen recognition. Alpha-beta T cell receptors are antigen specific receptors which are essential to the immune response and are present on the cell surface of T lymphocytes. Recognize peptide-major histocompatibility (MH) (pMH) complexes that are displayed by antigen presenting cells (APC), a prerequisite for efficient T cell adaptive immunity against pathogens. Binding of alpha-beta TR to pMH complex initiates TR-CD3 clustering on the cell surface and intracellular activation of LCK that phosphorylates the ITAM motifs of CD3G, CD3D, CD3E and CD247 enabling the recruitment of ZAP70. In turn ZAP70 phosphorylates LAT, which recruits numerous signaling molecules to form the LAT signalosome. The LAT signalosome propagates signal branching to three major signaling pathways, the calcium, the mitogen-activated protein kinase (MAPK) kinase and the nuclear factor NF-kappa-B (NF-kB) pathways, leading to the mobilization of transcription factors that are critical for gene expression and essential for T cell growth and differentiation. The T cell repertoire is generated in the thymus, by V-(D)-J rearrangement. This repertoire is then shaped by intrathymic selection events to generate a peripheral T cell pool of self-MH restricted, non-autoaggressive T cells. Post-thymic interaction of alpha-beta TR with the pMH complexes shapes TR structural and functional avidity. The protein is T cell receptor alpha variable 5 of Homo sapiens (Human).